A 341-amino-acid polypeptide reads, in one-letter code: MIELCGLKKSFSGKLALNDINLFIQEGEIFGVIGKSGAGKSTLLRCINILEKPDEGEVIIDGQNLMSLSRKNLALARHKIAMIFQHFNLLNSKTVFDNIALPMRIQGIDEELIKQKIEELLPVVELTDKKDAFPSQLSGGQKQRVAIARALSCSPKVLLCDEATSALDPATTDAILSLLKKINELYGITIVLITHEMDVVKRICQRLSVMVDGKIVETTALSNIFNKPESLARKMLYAQISPELPTCLTRRLADYATEKPLVRLFFQGEEATVPFISQTSRELNMDINILLANIDRFDGVTCGVLVVELTANPLLLEAFINRCEQAGITVEVLGYVLPDGL.

Residues 2 to 237 enclose the ABC transporter domain; that stretch reads IELCGLKKSF…PESLARKMLY (236 aa). 34-41 serves as a coordination point for ATP; it reads GKSGAGKS.

It belongs to the ABC transporter superfamily. Methionine importer (TC 3.A.1.24) family. In terms of assembly, the complex is composed of two ATP-binding proteins (MetN), two transmembrane proteins (MetI) and a solute-binding protein (MetQ).

Its subcellular location is the cell inner membrane. The enzyme catalyses L-methionine(out) + ATP + H2O = L-methionine(in) + ADP + phosphate + H(+). It catalyses the reaction D-methionine(out) + ATP + H2O = D-methionine(in) + ADP + phosphate + H(+). Its function is as follows. Part of the ABC transporter complex MetNIQ involved in methionine import. Responsible for energy coupling to the transport system. In Legionella pneumophila (strain Paris), this protein is Methionine import ATP-binding protein MetN.